The sequence spans 318 residues: NADH-ubiquinone oxidoreductase chain 1 (318 aa).

Transmembrane regions (helical) follow at residues 2–22, 68–88, 100–120, 147–167, 172–192, 217–237, 253–273, and 294–314; these read FMIN…FLTL, ISMF…MWIP, LGVL…LWSG, AIIL…TLII, VWLI…TLAE, AGPF…MNIF, ELYT…FLWI, and LPLT…LSSI.

Belongs to the complex I subunit 1 family.

It is found in the mitochondrion inner membrane. It carries out the reaction a ubiquinone + NADH + 5 H(+)(in) = a ubiquinol + NAD(+) + 4 H(+)(out). Core subunit of the mitochondrial membrane respiratory chain NADH dehydrogenase (Complex I) that is believed to belong to the minimal assembly required for catalysis. Complex I functions in the transfer of electrons from NADH to the respiratory chain. The immediate electron acceptor for the enzyme is believed to be ubiquinone. This Ovis aries (Sheep) protein is NADH-ubiquinone oxidoreductase chain 1 (MT-ND1).